A 203-amino-acid polypeptide reads, in one-letter code: Imidazoleglycerol-phosphate dehydratase (203 aa).

Positions 184–203 are disordered; it reads DPRRSSQIPSSKGVLEQAGQ.

Belongs to the imidazoleglycerol-phosphate dehydratase family.

The protein resides in the cytoplasm. The catalysed reaction is D-erythro-1-(imidazol-4-yl)glycerol 3-phosphate = 3-(imidazol-4-yl)-2-oxopropyl phosphate + H2O. It functions in the pathway amino-acid biosynthesis; L-histidine biosynthesis; L-histidine from 5-phospho-alpha-D-ribose 1-diphosphate: step 6/9. This chain is Imidazoleglycerol-phosphate dehydratase, found in Prochlorococcus marinus (strain NATL1A).